The primary structure comprises 918 residues: Valine--tRNA ligase (918 aa).

The short motif at 50–60 (PNVTGSLHMGH) is the 'HIGH' region element. The short motif at 548 to 552 (KMSKS) is the 'KMSKS' region element. An ATP-binding site is contributed by Lys-551. Residues 849-883 (NDFVNLEALKDRLTKDLKKVNSDIETLNKRISNKN) adopt a coiled-coil conformation.

It belongs to the class-I aminoacyl-tRNA synthetase family. ValS type 1 subfamily. Monomer.

It is found in the cytoplasm. The enzyme catalyses tRNA(Val) + L-valine + ATP = L-valyl-tRNA(Val) + AMP + diphosphate. Functionally, catalyzes the attachment of valine to tRNA(Val). As ValRS can inadvertently accommodate and process structurally similar amino acids such as threonine, to avoid such errors, it has a 'posttransfer' editing activity that hydrolyzes mischarged Thr-tRNA(Val) in a tRNA-dependent manner. The protein is Valine--tRNA ligase of Prochlorococcus marinus subsp. pastoris (strain CCMP1986 / NIES-2087 / MED4).